Here is a 514-residue protein sequence, read N- to C-terminus: MTTAKRPLALLILDGWGYRENTHNNAIFHANTPVLDRLNAQYPHSLISGSGLDVGLPDGQMGNSEVGHINLGSGRVVYQELTRISKAIADHEFEQNPALCDAVDSAIKAGGAVHIMGLLSAGGVHSHEEHIEAMCRMAVARGATKVYLHAFLDGRDTPPRSAKTSLSHFDDLFTTLGHGRIASIIGRYFAMDRDNRWDRVSQAYDLITQGKSKFQYDNAVTALEAAYERNENDEFVSSSAITDADGQVATLQDGDALIFMNFRADRARQITRSFINPDFDGFERAVVPKMHFVTLTEYAGDIKAPIAYPSENLVNTLGEVLQKQGRTQLRISETEKYAHVTFFFNGGKEEPFEGEDRILINSPKVATYDLQPEMSSAELTDKLVAAIESTKYDVIICNYPNGDMVGHTGNFDAAVKACEAVDACIGRVVDALAKVGGECIITADHGNAEQMTDETTGQAHTAHTSELVPFVFVGRNATIDEGGKLSDVAPTILTLIGEAIPAEMTGKPLIHIKE.

The Mn(2+) site is built by Asp14 and Ser64. Ser64 functions as the Phosphoserine intermediate in the catalytic mechanism. Substrate-binding positions include His125, 155-156, Arg187, Arg193, 263-266, and Lys336; these read RD and RADR. Mn(2+)-binding residues include Asp403, His407, Asp444, His445, and His463.

It belongs to the BPG-independent phosphoglycerate mutase family. As to quaternary structure, monomer. Mn(2+) is required as a cofactor.

The enzyme catalyses (2R)-2-phosphoglycerate = (2R)-3-phosphoglycerate. It functions in the pathway carbohydrate degradation; glycolysis; pyruvate from D-glyceraldehyde 3-phosphate: step 3/5. Catalyzes the interconversion of 2-phosphoglycerate and 3-phosphoglycerate. The polypeptide is 2,3-bisphosphoglycerate-independent phosphoglycerate mutase (Shewanella baltica (strain OS185)).